Consider the following 188-residue polypeptide: Transcription factor FapR (188 aa).

It belongs to the FapR family.

Functionally, transcriptional factor involved in regulation of membrane lipid biosynthesis by repressing genes involved in fatty acid and phospholipid metabolism. In Bacillus licheniformis (strain ATCC 14580 / DSM 13 / JCM 2505 / CCUG 7422 / NBRC 12200 / NCIMB 9375 / NCTC 10341 / NRRL NRS-1264 / Gibson 46), this protein is Transcription factor FapR.